A 542-amino-acid polypeptide reads, in one-letter code: Chaperonin GroEL 2 (542 aa).

ATP is bound by residues 30 to 33, Lys51, 87 to 91, Gly415, and Asp495; these read TLGP and DGTTT.

The protein belongs to the chaperonin (HSP60) family. As to quaternary structure, forms a cylinder of 14 subunits composed of two heptameric rings stacked back-to-back. Interacts with the co-chaperonin GroES.

Its subcellular location is the cytoplasm. The catalysed reaction is ATP + H2O + a folded polypeptide = ADP + phosphate + an unfolded polypeptide.. Together with its co-chaperonin GroES, plays an essential role in assisting protein folding. The GroEL-GroES system forms a nano-cage that allows encapsulation of the non-native substrate proteins and provides a physical environment optimized to promote and accelerate protein folding. This is Chaperonin GroEL 2 from Methylococcus capsulatus (strain ATCC 33009 / NCIMB 11132 / Bath).